The sequence spans 443 residues: MIQQDPGALYSDHLAVLCRRAEQALARGGFDHLVVPSGTLHYQVFDDRDYPYAVNPQFKAWLPLTRVPNSWIVFTPGKRPAVIFHQPFDYWHVVPDAPSGWWVEHFDIHIIRKPEEALALLPADPSRCAILGEPQSALGNYVPNNPAPVVNYLEWHRGSKTPYEIALMRQAQVLGVRGHRAAEAAFRNGADEFSIHMAYCQAVGQDANELPYGNIVALNEHAAVLHYTELGRKAPQPLRSFLIDAGASAHGYASDITRTYAAQGHDEFAAMIAAVDAAQQQMCAAVRPGFDYKQLHVDAHLSLMGVLKDFGVIKVSPQTALETGVSAAFFPHGIGHLIGLQVHDVAGFAASDEGGRIERPAGHPYLRLTRVLEPGMVVTIEPGLYFIDMLLNEVKDAGHGDAINWERVDFFRPYGGIRIEDEVLCTDGEADNLTRPAFAAANG.

Asp-244, Asp-255, His-336, Glu-381, and Glu-420 together coordinate Mn(2+).

This sequence belongs to the peptidase M24B family. Bacterial-type prolidase subfamily. It depends on Mn(2+) as a cofactor.

The catalysed reaction is Xaa-L-Pro dipeptide + H2O = an L-alpha-amino acid + L-proline. Splits dipeptides with a prolyl residue in the C-terminal position. In Stenotrophomonas maltophilia (strain K279a), this protein is Xaa-Pro dipeptidase.